A 508-amino-acid chain; its full sequence is Metalloprotease TIKI1 (508 aa).

The N-terminal stretch at 1–23 (MVIIWNIFLPAFLLVLAKASLRS) is a signal peptide. The Extracellular segment spans residues 24 to 485 (SRDSANCKLN…KYIKAAQSVS (462 aa)). Asparagine 219, asparagine 228, asparagine 277, and asparagine 335 each carry an N-linked (GlcNAc...) asparagine glycan. A helical transmembrane segment spans residues 486-506 (FSLSIPSAFLLLAWCFQQVAV). Residues 507 to 508 (LQ) lie on the Cytoplasmic side of the membrane.

Belongs to the TIKI family. Mn(2+) serves as cofactor. It depends on Co(2+) as a cofactor. Zygotically expressed in the Spemann-Mangold organizer, in particular in the head Spemann-Mangold organizer region responsible for anterior patterning.

It is found in the cell membrane. In terms of biological role, metalloprotease that acts as a negative regulator of the Wnt signaling pathway: expressed in the Spemann-Mangold organizer and is required for anterior-neural patterning in head formation in embryos. Acts by mediating the cleavage of the N-terminal residues of a subset of Wnt proteins. Following cleavage, Wnt proteins become oxidized and form large disulfide-bond oligomers, leading to their inactivation. Able to cleave wnt8. This Xenopus tropicalis (Western clawed frog) protein is Metalloprotease TIKI1 (trabd2a).